The primary structure comprises 1088 residues: DNA ligase 4 (1088 aa).

Disordered stretches follow at residues 1 to 56 (MALS…KFND) and 73 to 117 (TTTT…TTTT). Composition is skewed to low complexity over residues 25 to 53 (DFKN…YNNK) and 73 to 90 (TTTT…INKT). Positions 95–105 (DDIFDDEDEDS) are enriched in acidic residues. ATP is bound by residues E414, K416, R421, E467, F514, E574, K579, K596, and K598. The active-site N6-AMP-lysine intermediate is the K416. E467 contributes to the Mg(2+) binding site. E574 serves as a coordination point for Mg(2+). 2 BRCT domains span residues 827–917 (PTQN…PKYM) and 984–1088 (CWWS…EILD).

The protein belongs to the ATP-dependent DNA ligase family. Mg(2+) is required as a cofactor.

The protein resides in the nucleus. It carries out the reaction ATP + (deoxyribonucleotide)n-3'-hydroxyl + 5'-phospho-(deoxyribonucleotide)m = (deoxyribonucleotide)n+m + AMP + diphosphate.. In terms of biological role, DNA ligase involved in DNA non-homologous end joining (NHEJ); required for double-strand break (DSB) repair. This is DNA ligase 4 (lig4) from Dictyostelium discoideum (Social amoeba).